We begin with the raw amino-acid sequence, 524 residues long: MADDIDIEAMLEAPYKKDENKLSSANGHEERSKKRKKSKSRSRSHERKRSKSKERKRSRDRERKKSKSRERKRSRSKERRRSRSRSRDRRFRGRYRSPYSGPKFNSAIRGKIGLPHSIKLSRRRSRSKSPFRKDKSPVREPIDNLTPEERDARTVFCMQLAARIRPRDLEEFFSTVGKVRDVRMISDRNSRRSKGIAYVEFVDVSSVPLAIGLTGQRVLGVPIIVQASQAEKNRAAAMANNLQKGSAGPMRLYVGSLHFNITEDMLRGIFEPFGRIESIQLMMDSETGRSKGYGFITFSDSECAKKALEQLNGFELAGRPMKVGHVTERTDASSASSFLDSDELERTGIDLGTTGRLQLMARLAEGTGLQIPPAAQQALQMSGSLAFGAVADLQTRLSQQTEASALAAAASVQPLATQCFQLSNMFNPQTEEEVGWDTEIKDDVIEECNKHGGVIHIYVDKNSAQGNVYVKCPSIAAAIAAVNALHGRWFAGKMITAAYVPLPTYHNLFPDSMTATQLLVPSRR.

A disordered region spans residues 1 to 146 (MADDIDIEAM…PVREPIDNLT (146 aa)). Ala2 carries the N-acetylalanine modification. A compositionally biased stretch (basic and acidic residues) spans 14 to 32 (PYKKDENKLSSANGHEERS). Composition is skewed to basic residues over residues 33-56 (KKRK…KERK) and 64-95 (KKSK…RGRY). Tyr95 carries the post-translational modification Phosphotyrosine. Ser97 and Ser100 each carry phosphoserine. Residue Lys111 forms a Glycyl lysine isopeptide (Lys-Gly) (interchain with G-Cter in SUMO2) linkage. Phosphoserine is present on Ser117. Lys119 is covalently cross-linked (Glycyl lysine isopeptide (Lys-Gly) (interchain with G-Cter in SUMO2)). Residues 119-130 (KLSRRRSRSKSP) show a composition bias toward basic residues. Residues Ser121 and Ser136 each carry the phosphoserine modification. The segment covering 131 to 146 (FRKDKSPVREPIDNLT) has biased composition (basic and acidic residues). The residue at position 146 (Thr146) is a Phosphothreonine. The RRM 1 domain occupies 153–230 (RTVFCMQLAA…VPIIVQASQA (78 aa)). A Glycyl lysine isopeptide (Lys-Gly) (interchain with G-Cter in SUMO2) cross-link involves residue Lys244. The 79-residue stretch at 250–328 (MRLYVGSLHF…RPMKVGHVTE (79 aa)) folds into the RRM 2 domain. Residues 291–355 (KGYGFITFSD…RTGIDLGTTG (65 aa)) are activating domain. An interaction with JUN region spans residues 291 to 400 (KGYGFITFSD…ADLQTRLSQQ (110 aa)). Residues Ser334, Ser337, and Ser341 each carry the phosphoserine modification. An interaction with ESR1 and ESR2 region spans residues 355–400 (GRLQLMARLAEGTGLQIPPAAQQALQMSGSLAFGAVADLQTRLSQQ). The interaction with NCOA6 stretch occupies residues 400 to 524 (QTEASALAAA…ATQLLVPSRR (125 aa)). The region spanning 439–502 (EIKDDVIEEC…KMITAAYVPL (64 aa)) is the RRM 3 domain.

This sequence belongs to the splicing factor SR family. As to quaternary structure, interacts with NCOA6 and JUN. Interacts with ESR1 and ESR2, in the presence of estradiol (E2). Interacts with RSRC1 (via Arg/Ser-rich domain). Interacts with SF3B1. Interacts with ZNF106 (via N-terminus).

The protein localises to the nucleus speckle. Functionally, RNA-binding protein that acts as a pre-mRNA splicing factor. Acts by promoting exon inclusion via regulation of exon cassette splicing. Also acts as a transcriptional coactivator for steroid nuclear receptors ESR1/ER-alpha and ESR2/ER-beta, and JUN/AP-1, independently of the pre-mRNA splicing factor activity. The chain is RNA-binding protein 39 (RBM39) from Pongo abelii (Sumatran orangutan).